Consider the following 669-residue polypeptide: UvrABC system protein B (669 aa).

One can recognise a Helicase ATP-binding domain in the interval 26 to 183 (TNFHAGIAKQ…RHLTELQYTR (158 aa)). 39-46 (GVTGSGKT) is an ATP binding site. The Beta-hairpin signature appears at 92-115 (YYDYYQPEAYVPASDTFIEKDSSI). Residues 431-597 (QVDDLISQIN…SVVRPISDIL (167 aa)) enclose the Helicase C-terminal domain. Residues 631–666 (AAQMKMLEQQMYQHARDLEFEDAARIRDQIQRLREA) enclose the UVR domain.

This sequence belongs to the UvrB family. In terms of assembly, forms a heterotetramer with UvrA during the search for lesions. Interacts with UvrC in an incision complex.

The protein localises to the cytoplasm. Its function is as follows. The UvrABC repair system catalyzes the recognition and processing of DNA lesions. A damage recognition complex composed of 2 UvrA and 2 UvrB subunits scans DNA for abnormalities. Upon binding of the UvrA(2)B(2) complex to a putative damaged site, the DNA wraps around one UvrB monomer. DNA wrap is dependent on ATP binding by UvrB and probably causes local melting of the DNA helix, facilitating insertion of UvrB beta-hairpin between the DNA strands. Then UvrB probes one DNA strand for the presence of a lesion. If a lesion is found the UvrA subunits dissociate and the UvrB-DNA preincision complex is formed. This complex is subsequently bound by UvrC and the second UvrB is released. If no lesion is found, the DNA wraps around the other UvrB subunit that will check the other stand for damage. The chain is UvrABC system protein B from Xylella fastidiosa (strain M12).